Reading from the N-terminus, the 240-residue chain is Small ribosomal subunit protein uS2 (240 aa).

Belongs to the universal ribosomal protein uS2 family. In terms of assembly, component of the small ribosomal subunit. Mature ribosomes consist of a small (40S) and a large (60S) subunit. The 40S subunit contains about 33 different proteins and 1 molecule of RNA (18S). The 60S subunit contains about 49 different proteins and 3 molecules of RNA (25S, 5.8S and 5S). Interacts with RPS21.

The protein localises to the cytoplasm. Its function is as follows. Required for the assembly and/or stability of the 40S ribosomal subunit. Required for the processing of the 20S rRNA-precursor to mature 18S rRNA in a late step of the maturation of 40S ribosomal subunits. The polypeptide is Small ribosomal subunit protein uS2 (Enterocytozoon bieneusi (strain H348) (Microsporidian parasite)).